A 144-amino-acid polypeptide reads, in one-letter code: Large ribosomal subunit protein uL15 (144 aa).

Residues 1–45 (MNLNTLSPDPGSRPSRRRVGRGIGSGLGKTCGKGHKGQKSRAGGY) form a disordered region. Gly residues predominate over residues 21–31 (RGIGSGLGKTC).

Belongs to the universal ribosomal protein uL15 family. In terms of assembly, part of the 50S ribosomal subunit.

In terms of biological role, binds to the 23S rRNA. This Legionella pneumophila (strain Corby) protein is Large ribosomal subunit protein uL15.